The sequence spans 98 residues: Cell cycle protein GpsB (98 aa).

Positions 34–71 (LDLIIKDYEAFQQEIDELRQENARLKRQVEELQKRPAM) form a coiled coil.

The protein belongs to the GpsB family. In terms of assembly, forms polymers through the coiled coil domains. Interacts with PBP1, MreC and EzrA.

It is found in the cytoplasm. Its function is as follows. Divisome component that associates with the complex late in its assembly, after the Z-ring is formed, and is dependent on DivIC and PBP2B for its recruitment to the divisome. Together with EzrA, is a key component of the system that regulates PBP1 localization during cell cycle progression. Its main role could be the removal of PBP1 from the cell pole after pole maturation is completed. Also contributes to the recruitment of PBP1 to the division complex. Not essential for septum formation. This is Cell cycle protein GpsB from Geobacillus kaustophilus (strain HTA426).